A 481-amino-acid chain; its full sequence is Glutamyl-tRNA(Gln) amidotransferase subunit A (481 aa).

Active-site charge relay system residues include Lys-76 and Ser-151. Ser-175 functions as the Acyl-ester intermediate in the catalytic mechanism.

The protein belongs to the amidase family. GatA subfamily. As to quaternary structure, heterotrimer of A, B and C subunits.

The enzyme catalyses L-glutamyl-tRNA(Gln) + L-glutamine + ATP + H2O = L-glutaminyl-tRNA(Gln) + L-glutamate + ADP + phosphate + H(+). Allows the formation of correctly charged Gln-tRNA(Gln) through the transamidation of misacylated Glu-tRNA(Gln) in organisms which lack glutaminyl-tRNA synthetase. The reaction takes place in the presence of glutamine and ATP through an activated gamma-phospho-Glu-tRNA(Gln). This Neisseria gonorrhoeae (strain ATCC 700825 / FA 1090) protein is Glutamyl-tRNA(Gln) amidotransferase subunit A.